Consider the following 398-residue polypeptide: Subtilisin-like serine protease EN45_076310 (398 aa).

Positions 1–19 (MGFLKLLSTSLATLAVVNA) are cleaved as a signal peptide. A propeptide spans 20–115 (GKLLTANDGD…VEPDMVVNAT (96 aa)) (removed in mature form). In terms of domain architecture, Inhibitor I9 spans 35–113 (SYIVVMNDGV…KYVEPDMVVN (79 aa)). A glycan (N-linked (GlcNAc...) asparagine) is linked at asparagine 113. Residues 124–134 (PSWGLSRISSK) are igE-binding. The region spanning 125-398 (SWGLSRISSK…KLLYNGINAQ (274 aa)) is the Peptidase S8 domain. Catalysis depends on aspartate 157, which acts as the Charge relay system. The igE-binding stretch occupies residues 163–170 (GHADFGGR). Residues 175-195 (TNTADNDDTDGNGHGTHTAST) form a disordered region. Histidine 188 acts as the Charge relay system in catalysis. The segment at 227–245 (IAGMDWAVKDSKSRGATGK) is igE-binding. Residue asparagine 249 is glycosylated (N-linked (GlcNAc...) asparagine). Positions 310–318 (SFTNFGSVV) are igE-binding. Catalysis depends on serine 343, which acts as the Charge relay system.

This sequence belongs to the peptidase S8 family.

It is found in the secreted. Its activity is regulated as follows. Inhibited by phenylmethanesulfonyl fluoride (PMSF) and diethyl pyrocarbonate (DEPC), but not by benzamidine. Functionally, serine protease that hydrolyzes casein, gelatin and human collagen type IV, but not elastin in vitro. Hydrolyzes OCLN of the human lung epithelial cells at 202-Gln-|-Ser-203 and Gln-211-|-Ile-212. The sequence is that of Subtilisin-like serine protease EN45_076310 from Penicillium chrysogenum (Penicillium notatum).